Reading from the N-terminus, the 397-residue chain is Dual-specificity RNA methyltransferase RlmN (397 aa).

Glu-116 serves as the catalytic Proton acceptor. In terms of domain architecture, Radical SAM core spans 122 to 366 (EDDRGTLCIS…SPIRKTRGDD (245 aa)). A disulfide bridge connects residues Cys-129 and Cys-371. 3 residues coordinate [4Fe-4S] cluster: Cys-136, Cys-140, and Cys-143. S-adenosyl-L-methionine contacts are provided by residues 195 to 196 (GE), Ser-227, 249 to 251 (SFH), and Asn-328. Cys-371 serves as the catalytic S-methylcysteine intermediate.

It belongs to the radical SAM superfamily. RlmN family. The cofactor is [4Fe-4S] cluster.

The protein resides in the cytoplasm. It carries out the reaction adenosine(2503) in 23S rRNA + 2 reduced [2Fe-2S]-[ferredoxin] + 2 S-adenosyl-L-methionine = 2-methyladenosine(2503) in 23S rRNA + 5'-deoxyadenosine + L-methionine + 2 oxidized [2Fe-2S]-[ferredoxin] + S-adenosyl-L-homocysteine. The enzyme catalyses adenosine(37) in tRNA + 2 reduced [2Fe-2S]-[ferredoxin] + 2 S-adenosyl-L-methionine = 2-methyladenosine(37) in tRNA + 5'-deoxyadenosine + L-methionine + 2 oxidized [2Fe-2S]-[ferredoxin] + S-adenosyl-L-homocysteine. Functionally, specifically methylates position 2 of adenine 2503 in 23S rRNA and position 2 of adenine 37 in tRNAs. m2A2503 modification seems to play a crucial role in the proofreading step occurring at the peptidyl transferase center and thus would serve to optimize ribosomal fidelity. The protein is Dual-specificity RNA methyltransferase RlmN of Ruegeria sp. (strain TM1040) (Silicibacter sp.).